We begin with the raw amino-acid sequence, 154 residues long: Superoxide dismutase [Cu-Zn] (154 aa).

Cu cation is bound by residues His-47, His-49, and His-64. An intrachain disulfide couples Cys-58 to Cys-147. Residues His-64, His-72, His-81, and Asp-84 each contribute to the Zn(2+) site. His-121 is a Cu cation binding site.

This sequence belongs to the Cu-Zn superoxide dismutase family. In terms of assembly, homodimer. The cofactor is Cu cation. Zn(2+) serves as cofactor.

Its subcellular location is the cytoplasm. It carries out the reaction 2 superoxide + 2 H(+) = H2O2 + O2. Functionally, destroys radicals which are normally produced within the cells and which are toxic to biological systems. In Pinus sylvestris (Scotch pine), this protein is Superoxide dismutase [Cu-Zn] (SODCC).